Consider the following 160-residue polypeptide: Troponin C, skeletal muscle (160 aa).

Residue Thr-2 is modified to N-acetylthreonine. 4 consecutive EF-hand domains span residues 15 to 50 (EMIAEFKAAFDMFDADGGGDISVKELGTVMRMLGQT), 51 to 86 (PTKEELDAIIEEVDEDGSGTIDFEEFLVMMVRQMKE), 91 to 126 (KSEEELAECFRIFDRNADGYIDPEELAEIFRASGEH), and 127 to 160 (VTDEEIESLMKDGDKNNDGRIDFDEFLKMMEGVQ). Positions 28, 30, 34, 39, 64, 66, 68, 70, 75, 104, 106, 108, 110, 115, 140, 142, 144, 146, and 151 each coordinate Ca(2+).

Belongs to the troponin C family.

Its function is as follows. Troponin is the central regulatory protein of striated muscle contraction. Tn consists of three components: Tn-I which is the inhibitor of actomyosin ATPase, Tn-T which contains the binding site for tropomyosin and Tn-C. The binding of calcium to Tn-C abolishes the inhibitory action of Tn on actin filaments. The sequence is that of Troponin C, skeletal muscle (TNNC2) from Homo sapiens (Human).